Consider the following 341-residue polypeptide: Methionine import ATP-binding protein MetN 3 (341 aa).

The ABC transporter domain maps to 2 to 241 (IEFQNVTKTF…PSHETTKRFI (240 aa)). Residue 38 to 45 (GFSGAGKS) participates in ATP binding.

It belongs to the ABC transporter superfamily. Methionine importer (TC 3.A.1.24) family. As to quaternary structure, the complex is composed of two ATP-binding proteins (MetN), two transmembrane proteins (MetI) and a solute-binding protein (MetQ).

The protein resides in the cell membrane. The enzyme catalyses L-methionine(out) + ATP + H2O = L-methionine(in) + ADP + phosphate + H(+). The catalysed reaction is D-methionine(out) + ATP + H2O = D-methionine(in) + ADP + phosphate + H(+). Part of the ABC transporter complex MetNIQ involved in methionine import. Responsible for energy coupling to the transport system. In Oceanobacillus iheyensis (strain DSM 14371 / CIP 107618 / JCM 11309 / KCTC 3954 / HTE831), this protein is Methionine import ATP-binding protein MetN 3.